Here is a 77-residue protein sequence, read N- to C-terminus: Inhibitor of histone-like protein HU (77 aa).

In terms of assembly, interacts with host homodimeric histone-like protein (HU) hupA; thereby replacing dsDNA from the HU-DNA complex.

Acts as a host growth inhibitor by inhibiting DNA-binding of microbial histone-like protein HU, thereby preventing chromosome segregation and causing filamentous cell morphology and growth defects in the host. This Bacillus phage SP01 (Bacteriophage SP01) protein is Inhibitor of histone-like protein HU.